Consider the following 123-residue polypeptide: UPF0102 protein PSHAa2523 (123 aa).

This sequence belongs to the UPF0102 family.

In Pseudoalteromonas translucida (strain TAC 125), this protein is UPF0102 protein PSHAa2523.